We begin with the raw amino-acid sequence, 201 residues long: Large ribosomal subunit protein eL15A (201 aa).

Residues 161 to 182 (SRGLTSIGKKSRGIGKGHRFNN) are disordered. Residues 169 to 179 (KKSRGIGKGHR) are compositionally biased toward basic residues.

It belongs to the eukaryotic ribosomal protein eL15 family. In terms of assembly, component of the large ribosomal subunit (LSU). Mature yeast ribosomes consist of a small (40S) and a large (60S) subunit. The 40S small subunit contains 1 molecule of ribosomal RNA (18S rRNA) and at least 33 different proteins. The large 60S subunit contains 3 rRNA molecules (25S, 5.8S and 5S rRNA) and at least 46 different proteins.

The protein localises to the cytoplasm. The protein resides in the nucleus. It localises to the nucleolus. Component of the ribosome, a large ribonucleoprotein complex responsible for the synthesis of proteins in the cell. The small ribosomal subunit (SSU) binds messenger RNAs (mRNAs) and translates the encoded message by selecting cognate aminoacyl-transfer RNA (tRNA) molecules. The large subunit (LSU) contains the ribosomal catalytic site termed the peptidyl transferase center (PTC), which catalyzes the formation of peptide bonds, thereby polymerizing the amino acids delivered by tRNAs into a polypeptide chain. The nascent polypeptides leave the ribosome through a tunnel in the LSU and interact with protein factors that function in enzymatic processing, targeting, and the membrane insertion of nascent chains at the exit of the ribosomal tunnel. This is Large ribosomal subunit protein eL15A (rpl15) from Schizosaccharomyces pombe (strain 972 / ATCC 24843) (Fission yeast).